A 583-amino-acid chain; its full sequence is Pectinesterase/pectinesterase inhibitor U1 (583 aa).

A signal peptide spans 1 to 40 (MTRVEDFFSKQIDFCKRKKKIYLAIVASVLLVAAVIGVVA). The segment at 60–221 (SSAHAIVKSA…EKMCSNALAM (162 aa)) is pectinesterase inhibitor U1. Asparagine 85, asparagine 105, and asparagine 224 each carry an N-linked (GlcNAc...) asparagine glycan. The pectinesterase U1 stretch occupies residues 272–570 (DVVVAADGSG…TPGRFIAGGS (299 aa)). Residues threonine 347 and glutamine 377 each contribute to the substrate site. The active-site Proton donor; for pectinesterase activity is aspartate 400. The cysteines at positions 414 and 434 are disulfide-linked. The active-site Nucleophile; for pectinesterase activity is aspartate 421. Positions 489 and 491 each coordinate substrate.

The protein in the N-terminal section; belongs to the PMEI family. This sequence in the C-terminal section; belongs to the pectinesterase family.

It is found in the secreted. The protein localises to the cell wall. The catalysed reaction is [(1-&gt;4)-alpha-D-galacturonosyl methyl ester](n) + n H2O = [(1-&gt;4)-alpha-D-galacturonosyl](n) + n methanol + n H(+). It participates in glycan metabolism; pectin degradation; 2-dehydro-3-deoxy-D-gluconate from pectin: step 1/5. Functionally, acts in the modification of cell walls via demethylesterification of cell wall pectin. The polypeptide is Pectinesterase/pectinesterase inhibitor U1 (PMEU1) (Solanum lycopersicum (Tomato)).